The chain runs to 441 residues: Dolichyl-diphosphooligosaccharide--protein glycosyltransferase 48 kDa subunit (441 aa).

The N-terminal stretch at 1–28 (MKMVPRLAVRAWPLCGLLLAALGCVCAS) is a signal peptide. Topologically, residues 29–412 (GPRTLVLLDN…YERFIPSAYP (384 aa)) are lumenal. A helical membrane pass occupies residues 413–432 (YYASAFSMMAGLFLFSVVFL). The Cytoplasmic portion of the chain corresponds to 433 to 441 (HMKEKEKSD).

This sequence belongs to the DDOST 48 kDa subunit family. Component of the oligosaccharyltransferase (OST) complex. OST exists in two different complex forms which contain common core subunits RPN1, RPN2, OST48, OST4, DAD1 and TMEM258, either STT3A or STT3B as catalytic subunits, and form-specific accessory subunits. STT3A complex assembly occurs through the formation of 3 subcomplexes. Subcomplex 1 contains RPN1 and TMEM258, subcomplex 2 contains the STT3A-specific subunits STT3A, DC2/OSTC, and KCP2 as well as the core subunit OST4, and subcomplex 3 contains RPN2, DAD1, and OST48. The STT3A complex can form stable complexes with the Sec61 complex or with both the Sec61 and TRAP complexes. Interacts with SMIM22.

Its subcellular location is the endoplasmic reticulum membrane. It functions in the pathway protein modification; protein glycosylation. Its function is as follows. Subunit of the oligosaccharyl transferase (OST) complex that catalyzes the initial transfer of a defined glycan (Glc(3)Man(9)GlcNAc(2) in eukaryotes) from the lipid carrier dolichol-pyrophosphate to an asparagine residue within an Asn-X-Ser/Thr consensus motif in nascent polypeptide chains, the first step in protein N-glycosylation. N-glycosylation occurs cotranslationally and the complex associates with the Sec61 complex at the channel-forming translocon complex that mediates protein translocation across the endoplasmic reticulum (ER). All subunits are required for a maximal enzyme activity. Required for the assembly of both SST3A- and SS3B-containing OST complexes. The protein is Dolichyl-diphosphooligosaccharide--protein glycosyltransferase 48 kDa subunit of Rattus norvegicus (Rat).